A 337-amino-acid chain; its full sequence is Eukaryotic translation initiation factor 3 subunit H (337 aa).

The region spanning 21 to 153 (VQCDGLAVMK…LKAYRLTPQA (133 aa)) is the MPN domain.

The protein belongs to the eIF-3 subunit H family. Component of the eukaryotic translation initiation factor 3 (eIF-3) complex. The eIF-3 complex interacts with pix. Interacts with mxt.

It is found in the cytoplasm. Component of the eukaryotic translation initiation factor 3 (eIF-3) complex, which is involved in protein synthesis of a specialized repertoire of mRNAs and, together with other initiation factors, stimulates binding of mRNA and methionyl-tRNAi to the 40S ribosome. The eIF-3 complex specifically targets and initiates translation of a subset of mRNAs involved in cell proliferation. In Drosophila ananassae (Fruit fly), this protein is Eukaryotic translation initiation factor 3 subunit H.